We begin with the raw amino-acid sequence, 124 residues long: Protein TraJ (124 aa).

The protein resides in the cytoplasm. Functionally, this protein is essential for positively regulating the expression of transfer genes that are involved in the conjugal transfer of DNA between bacterial cells. The chain is Protein TraJ (traJ) from Escherichia coli.